We begin with the raw amino-acid sequence, 145 residues long: Angiogenin (145 aa).

Positions 1-24 are cleaved as a signal peptide; sequence MAISPGPLFLIFVLGLVVIPPTLA. Gln25 is subject to Pyrrolidone carboxylic acid. Residue His37 is the Proton acceptor of the active site. Residues Arg45 and Asp46 each contribute to the tRNA site. 3 disulfide bridges follow: Cys50–Cys104, Cys63–Cys115, and Cys81–Cys130. A Nucleolar localization signal motif is present at residues 55–59; sequence KRRSL. Cys104 and Val126 together coordinate tRNA. His137 serves as the catalytic Proton donor.

Belongs to the pancreatic ribonuclease family. In terms of assembly, homodimer. Interacts with RNH1; inhibiting ANG ribonuclease activity. Interacts with PCNA.

Its subcellular location is the secreted. The protein localises to the nucleus. It localises to the nucleolus. It is found in the cytoplasm. The protein resides in the stress granule. With respect to regulation, has weak tRNA ribonuclease activity by itself due to partial autoinhibition by its C-terminus (residues 139-145), which folds into a short alpha-helix that partially occludes the substrate-binding site. In absence of stress, the ribonuclease activity is inhibited by RNH1 in the cytoplasm. In response to stress, dissociates from RNH1 in the cytoplasm and associates with cytoplasmic ribosomes with vacant A-sites: ribosomes directly activate the tRNA ribonuclease activity of ANG by refolding the C-terminal alpha-helix. In response to stress, the angiogenic activity of ANG is inhibited by RNH1 in the nucleus. In terms of biological role, secreted ribonuclease that can either promote or restrict cell proliferation of target cells, depending on the context. Endocytosed in target cells via its receptor PLXNB2 and translocates to the cytoplasm or nucleus. Under stress conditions, localizes to the cytoplasm and promotes the assembly of stress granules (SGs): specifically cleaves a subset of tRNAs within anticodon loops to produce tRNA-derived stress-induced fragments (tiRNAs), resulting in translation repression and inhibition of cell proliferation. tiRNas also prevent formation of apoptosome, thereby promoting cell survival. Preferentially cleaves RNAs between a pyrimidine and an adenosine residue, suggesting that it cleaves the anticodon loop of tRNA(Ala) (32-UUAGCAU-38) after positions 33 and 36. Cleaves a subset of tRNAs, including tRNA(Ala), tRNA(Glu), tRNA(Gly), tRNA(Lys), tRNA(Val), tRNA(His), tRNA(Asp) and tRNA(Sec). Under growth conditions and in differentiated cells, translocates to the nucleus and stimulates ribosomal RNA (rRNA) transcription, including that containing the initiation site sequences of 45S rRNA, thereby promoting cell growth and proliferation. Angiogenin induces vascularization of normal and malignant tissues via its ability to promote rRNA transcription. Involved in hematopoietic stem and progenitor cell (HSPC) growth and survival by promoting rRNA transcription in growth conditions and inhibiting translation in response to stress, respectively. Mediates the crosstalk between myeloid and intestinal epithelial cells to protect the intestinal epithelial barrier integrity: secreted by myeloid cells and promotes intestinal epithelial cells proliferation and survival. Also mediates osteoclast-endothelial cell crosstalk in growing bone: produced by osteoclasts and protects the neighboring vascular cells against senescence by promoting rRNA transcription. The protein is Angiogenin of Mus musculus (Mouse).